We begin with the raw amino-acid sequence, 955 residues long: Bifunctional glutamine synthetase adenylyltransferase/adenylyl-removing enzyme (955 aa).

An adenylyl removase region spans residues 1–458 (MTAQAPLSVA…QFEQTFSDKQ (458 aa)). The adenylyl transferase stretch occupies residues 464–955 (CAAIWHADLL…GSIDAASPTP (492 aa)).

It belongs to the GlnE family. Mg(2+) is required as a cofactor.

The enzyme catalyses [glutamine synthetase]-O(4)-(5'-adenylyl)-L-tyrosine + phosphate = [glutamine synthetase]-L-tyrosine + ADP. The catalysed reaction is [glutamine synthetase]-L-tyrosine + ATP = [glutamine synthetase]-O(4)-(5'-adenylyl)-L-tyrosine + diphosphate. Functionally, involved in the regulation of glutamine synthetase GlnA, a key enzyme in the process to assimilate ammonia. When cellular nitrogen levels are high, the C-terminal adenylyl transferase (AT) inactivates GlnA by covalent transfer of an adenylyl group from ATP to specific tyrosine residue of GlnA, thus reducing its activity. Conversely, when nitrogen levels are low, the N-terminal adenylyl removase (AR) activates GlnA by removing the adenylyl group by phosphorolysis, increasing its activity. The regulatory region of GlnE binds the signal transduction protein PII (GlnB) which indicates the nitrogen status of the cell. This chain is Bifunctional glutamine synthetase adenylyltransferase/adenylyl-removing enzyme, found in Ralstonia nicotianae (strain ATCC BAA-1114 / GMI1000) (Ralstonia solanacearum).